A 227-amino-acid chain; its full sequence is Cytochrome c oxidase subunit 2 (227 aa).

Residues 1-14 (MAYPAQMGFQDATS) lie on the Mitochondrial intermembrane side of the membrane. The helical transmembrane segment at 15 to 45 (PIMEELLYFHDHTLMIVFMISSLVLYTISLM) threads the bilayer. Residues 46–59 (LTTSLTHTNTMNAQ) lie on the Mitochondrial matrix side of the membrane. A helical membrane pass occupies residues 60 to 87 (EVETVWTILPAIICILIALPSLRILYMM). Over 88 to 227 (DEINNPSLTI…YFEKWLLTML (140 aa)) the chain is Mitochondrial intermembrane. Positions 161, 196, 198, 200, 204, and 207 each coordinate Cu cation. A Mg(2+)-binding site is contributed by Glu-198. Tyr-218 is modified (phosphotyrosine).

Belongs to the cytochrome c oxidase subunit 2 family. In terms of assembly, component of the cytochrome c oxidase (complex IV, CIV), a multisubunit enzyme composed of 14 subunits. The complex is composed of a catalytic core of 3 subunits MT-CO1, MT-CO2 and MT-CO3, encoded in the mitochondrial DNA, and 11 supernumerary subunits COX4I, COX5A, COX5B, COX6A, COX6B, COX6C, COX7A, COX7B, COX7C, COX8 and NDUFA4, which are encoded in the nuclear genome. The complex exists as a monomer or a dimer and forms supercomplexes (SCs) in the inner mitochondrial membrane with NADH-ubiquinone oxidoreductase (complex I, CI) and ubiquinol-cytochrome c oxidoreductase (cytochrome b-c1 complex, complex III, CIII), resulting in different assemblies (supercomplex SCI(1)III(2)IV(1) and megacomplex MCI(2)III(2)IV(2)). Found in a complex with TMEM177, COA6, COX18, COX20, SCO1 and SCO2. Interacts with TMEM177 in a COX20-dependent manner. Interacts with COX20. Interacts with COX16. The cofactor is Cu cation.

It is found in the mitochondrion inner membrane. The catalysed reaction is 4 Fe(II)-[cytochrome c] + O2 + 8 H(+)(in) = 4 Fe(III)-[cytochrome c] + 2 H2O + 4 H(+)(out). Component of the cytochrome c oxidase, the last enzyme in the mitochondrial electron transport chain which drives oxidative phosphorylation. The respiratory chain contains 3 multisubunit complexes succinate dehydrogenase (complex II, CII), ubiquinol-cytochrome c oxidoreductase (cytochrome b-c1 complex, complex III, CIII) and cytochrome c oxidase (complex IV, CIV), that cooperate to transfer electrons derived from NADH and succinate to molecular oxygen, creating an electrochemical gradient over the inner membrane that drives transmembrane transport and the ATP synthase. Cytochrome c oxidase is the component of the respiratory chain that catalyzes the reduction of oxygen to water. Electrons originating from reduced cytochrome c in the intermembrane space (IMS) are transferred via the dinuclear copper A center (CU(A)) of subunit 2 and heme A of subunit 1 to the active site in subunit 1, a binuclear center (BNC) formed by heme A3 and copper B (CU(B)). The BNC reduces molecular oxygen to 2 water molecules using 4 electrons from cytochrome c in the IMS and 4 protons from the mitochondrial matrix. This is Cytochrome c oxidase subunit 2 (MT-CO2) from Daubentonia madagascariensis (Aye-aye).